The primary structure comprises 1014 residues: MICAL-like protein 2 (1014 aa).

In terms of domain architecture, Calponin-homology (CH) spans 1–107; it reads MAAIKALQEW…YVSQYYNYFH (107 aa). The interval 1 to 261 is forms an intramolecular interaction with the C-terminal coiled coil domain keeping the protein in a closed conformation; the sequence is MAAIKALQEW…KLSNLASRQP (261 aa). Phosphoserine occurs at positions 110, 144, and 154. Positions 114–181 are disordered; the sequence is GMAGMKRPSS…PSPKAAPGTV (68 aa). An LIM zinc-binding domain is found at 187–249; it reads SICGVCGKHV…THHSSEAVSV (63 aa). The residue at position 250 (Ser-250) is a Phosphoserine. Residues 262–394 are necessary and sufficient for interaction with actinins; sequence GGGIADTRPI…QGQAASKGVK (133 aa). The mediates targeting to the cell plasma membrane stretch occupies residues 262 to 810; that stretch reads GGGIADTRPI…QDDQTRSCKE (549 aa). Disordered stretches follow at residues 311–450 and 609–780; these read LTPP…SRVP and TLPK…RRKK. Positions 332-355 are enriched in polar residues; sequence STVTTTSANSKATTHVTNSSPVGW. Low complexity predominate over residues 356–368; sequence SSSAQSSTGTSGS. A compositionally biased stretch (polar residues) spans 384 to 398; that stretch reads PQGQAASKGVKTQLN. Low complexity-rich tracts occupy residues 399-419 and 438-447; these read SSTD…SSRT and PASSSSSHAS. 2 stretches are compositionally biased toward polar residues: residues 624–633 and 646–656; these read LSHSTTQAFS and VGSTSWTSVSL. Basic and acidic residues-rich tracts occupy residues 701–711 and 720–737; these read EGWRARLKPVD and LEQK…DTPR. The span at 747-758 shows a compositional bias: polar residues; sequence IHITLTPIQQKR. Thr-759 is modified (phosphothreonine). A phosphoserine mark is found at Ser-773 and Ser-837. The forms an intramolecular interaction with the N-terminal Calponin-homology and LIM zinc-binding domains-containing region keeping the protein in a closed conformation stretch occupies residues 811–918; it reads KTATWGTRES…LMYKSKDQCL (108 aa). The bMERB domain occupies 838–985; sequence PVRLHPNYIS…EQEEDQMLES (148 aa). Residues 845–885 adopt a coiled-coil conformation; the sequence is YISQEELQRQLQDIERQLDALELRGVELEKRLRAAEGDASE. The segment at 918–1014 is mediates interaction with RAB13 and is required for transition from the closed to the open conformation; the sequence is LEERQLDLQG…WSSKSKSGQT (97 aa).

Interacts with RAB13 (GTP-bound form); competes with RAB8A and is involved in tight junctions assembly. Interacts with RAB8A; competes with RAB13 and is involved in E-cadherin endocytic recycling. Interacts with RAB8B. Interacts (preferentially in opened conformation) with ACTN1 and ACTN4; stimulated by RAB13 activation. Interacts (via calponin-homology (CH) domain) with the filamins FLNA, FLNB and FLNC (via actin-binding domain).

It is found in the cell membrane. It localises to the cell junction. The protein resides in the tight junction. Its subcellular location is the recycling endosome. The protein localises to the cell projection. It is found in the neuron projection. It localises to the cytoplasm. The protein resides in the cytoskeleton. Functionally, effector of small Rab GTPases which is involved in junctional complexes assembly through the regulation of cell adhesion molecules transport to the plasma membrane and actin cytoskeleton reorganization. Regulates the endocytic recycling of occludins, claudins and E-cadherin to the plasma membrane and may thereby regulate the establishment of tight junctions and adherens junctions. In parallel, may regulate actin cytoskeleton reorganization directly through interaction with F-actin or indirectly through actinins and filamins. Most probably involved in the processes of epithelial cell differentiation, cell spreading and neurite outgrowth. Undergoes liquid-liquid phase separation to form tubular recycling endosomes. Plays 2 sequential roles in the biogenesis of tubular recycling endosomes: first organizes phase separation and then the closed form formed by interaction with RAB8A promotes endosomal tubulation. In Rattus norvegicus (Rat), this protein is MICAL-like protein 2 (Micall2).